The chain runs to 85 residues: Arminin 524 (85 aa).

Positions 1 to 18 (MKAVFAILFLAFIALTYA) are cleaved as a signal peptide. The propeptide occupies 19 to 57 (KSYDEVKEEIKNEVEREIFEDLEEESDELDNDVEEFNDA). Alanine amide is present on alanine 82.

The protein belongs to the arminin family. In terms of tissue distribution, expressed in entodermal epithelium along the body column.

The protein resides in the secreted. Its subcellular location is the target cell membrane. Antimicrobial peptide with a broad-spectrum antimicrobial activity. Keeps its antibacterial activity under a wide range of salt concentrations that mimic physiological conditions of human blood, which is surprising, since Hydra is an obligate freshwater animal with nearly no salt tolerance. Does not affect red blood cells. This is Arminin 524 from Hydra oligactis (Brown hydra).